A 374-amino-acid polypeptide reads, in one-letter code: Phosphate-binding protein PstS 1 (374 aa).

The first 23 residues, 1–23 (MKIRLHTLLAVLTAAPLLLAAAG), serve as a signal peptide directing secretion. The N-palmitoyl cysteine moiety is linked to residue Cys24. Cys24 carries the S-diacylglycerol cysteine lipid modification. The tract at residues 25–48 (GSKPPSGSPETGAGAGTVATTPAS) is disordered. Phosphate contacts are provided by residues 58–60 (STL), Ser88, Asp106, and 189–191 (SGD).

It belongs to the PstS family. The complex is composed of two ATP-binding proteins (PstB), two transmembrane proteins (PstC and PstA) and a solute-binding protein (PstS).

Its subcellular location is the cell membrane. In terms of biological role, part of the ABC transporter complex PstSACB involved in phosphate import. The sequence is that of Phosphate-binding protein PstS 1 (pstS1) from Mycobacterium tuberculosis (strain CDC 1551 / Oshkosh).